The following is a 287-amino-acid chain: T-cell ecto-ADP-ribosyltransferase 1 (287 aa).

An N-terminal signal peptide occupies residues 1–20 (MPSNNFKFFLTWWLTQQVTG). 3 disulfide bridges follow: C41–C246, C80–C201, and C141–C193. The TR mART core domain maps to 61 to 241 (EELKLEWEKA…ISLDSPKRKK (181 aa)). NAD(+) is bound by residues Y98 and R146. Active-site residues include R146 and S167. N-linked (GlcNAc...) asparagine glycosylation is present at N171. An NAD(+)-binding site is contributed by S202. The active site involves E209. N256 is a glycosylation site (N-linked (GlcNAc...) asparagine). S258 carries the GPI-anchor amidated serine lipid modification. A propeptide spans 259–287 (SLGSRESCVSLFLVVLLGLLVQQLTLAEP) (removed in mature form).

This sequence belongs to the Arg-specific ADP-ribosyltransferase family. It is proposed that in the absence of reducing agents, a disulfide bond is formed between Cys-80 and Cys-201, leading to a conformational change that reduces the catalytic rate of NAD glycohydrolysis. As to expression, expressed in spleen, intestine and thymus.

It is found in the cell membrane. It carries out the reaction L-arginyl-[protein] + NAD(+) = N(omega)-(ADP-D-ribosyl)-L-arginyl-[protein] + nicotinamide + H(+). It catalyses the reaction NAD(+) + H2O = ADP-D-ribose + nicotinamide + H(+). Has both ADP-ribosyltransferase activity and thiol-dependent NAD(+) glycohydrolase activity. This chain is T-cell ecto-ADP-ribosyltransferase 1 (Art2a), found in Mus musculus (Mouse).